Here is a 730-residue protein sequence, read N- to C-terminus: UvrABC system protein C (730 aa).

Residues 16–95 form the GIY-YIG domain; that stretch reads AAPGVYKFRD…IKEFDPRFNV (80 aa). One can recognise a UVR domain in the interval 208–243; the sequence is DKLVKDLEKRMQQASEDLDFETAARLRDDIGALRKA. Positions 678–730 are disordered; that stretch reads ARALPAAVGDDELDKESESSVTSADAPSAESGSGDEGSESRELSMPTTGPSAQ.

The protein belongs to the UvrC family. As to quaternary structure, interacts with UvrB in an incision complex.

It is found in the cytoplasm. In terms of biological role, the UvrABC repair system catalyzes the recognition and processing of DNA lesions. UvrC both incises the 5' and 3' sides of the lesion. The N-terminal half is responsible for the 3' incision and the C-terminal half is responsible for the 5' incision. In Rhodococcus erythropolis (strain PR4 / NBRC 100887), this protein is UvrABC system protein C.